Reading from the N-terminus, the 452-residue chain is Cytoplasmic tRNA 2-thiolation protein 2 (452 aa).

This sequence belongs to the CTU2/NCS2 family.

It is found in the cytoplasm. The protein operates within tRNA modification; 5-methoxycarbonylmethyl-2-thiouridine-tRNA biosynthesis. Functionally, plays a central role in 2-thiolation of mcm(5)S(2)U at tRNA wobble positions of tRNA(Lys), tRNA(Glu) and tRNA(Gln). May act by forming a heterodimer with NCS6 that ligates sulfur from thiocarboxylated URM1 onto the uridine of tRNAs at wobble position. Prior mcm(5) tRNA modification by the elongator complex is required for 2-thiolation. May also be involved in protein urmylation. This chain is Cytoplasmic tRNA 2-thiolation protein 2, found in Candida albicans (strain SC5314 / ATCC MYA-2876) (Yeast).